Here is a 334-residue protein sequence, read N- to C-terminus: Holliday junction branch migration complex subunit RuvB (334 aa).

Residues M1–T181 form a large ATPase domain (RuvB-L) region. L19 and R20 together coordinate ADP. ATP is bound by residues E26, F27, and I28. ADP is bound by residues F27, I28, G61, L62, G63, K64, T65, and T66. ATP-binding residues include L62 and G63. Residues E127–F129 and R170 each bind ATP. Residues Y180, P216, and R217 each contribute to the ADP site. The segment at V182–E255 is small ATPAse domain (RuvB-S). Position 216 (P216) interacts with ATP. Residues G256–F334 form a head domain (RuvB-H) region. R309 and R314 together coordinate DNA.

This sequence belongs to the RuvB family. In terms of assembly, homohexamer. Forms an RuvA(8)-RuvB(12)-Holliday junction (HJ) complex. HJ DNA is sandwiched between 2 RuvA tetramers; dsDNA enters through RuvA and exits via RuvB. An RuvB hexamer assembles on each DNA strand where it exits the tetramer. Each RuvB hexamer is contacted by two RuvA subunits (via domain III) on 2 adjacent RuvB subunits; this complex drives branch migration. In the full resolvosome a probable DNA-RuvA(4)-RuvB(12)-RuvC(2) complex forms which resolves the HJ.

The protein resides in the cytoplasm. The catalysed reaction is ATP + H2O = ADP + phosphate + H(+). Functionally, the RuvA-RuvB-RuvC complex processes Holliday junction (HJ) DNA during genetic recombination and DNA repair, while the RuvA-RuvB complex plays an important role in the rescue of blocked DNA replication forks via replication fork reversal (RFR). RuvA specifically binds to HJ cruciform DNA, conferring on it an open structure. The RuvB hexamer acts as an ATP-dependent pump, pulling dsDNA into and through the RuvAB complex. RuvB forms 2 homohexamers on either side of HJ DNA bound by 1 or 2 RuvA tetramers; 4 subunits per hexamer contact DNA at a time. Coordinated motions by a converter formed by DNA-disengaged RuvB subunits stimulates ATP hydrolysis and nucleotide exchange. Immobilization of the converter enables RuvB to convert the ATP-contained energy into a lever motion, pulling 2 nucleotides of DNA out of the RuvA tetramer per ATP hydrolyzed, thus driving DNA branch migration. The RuvB motors rotate together with the DNA substrate, which together with the progressing nucleotide cycle form the mechanistic basis for DNA recombination by continuous HJ branch migration. Branch migration allows RuvC to scan DNA until it finds its consensus sequence, where it cleaves and resolves cruciform DNA. Promotes Holliday junction (HJ) branch migration in conjunction with RuvA. Subunits can be free, ADP- or ATP-bound; nucleotide binding changes during the reaction cycle. Has a DNA-dependent ATPase activity; dsDNA and supercoiled DNA but not ssDNA stimulate activity. This Thermotoga maritima (strain ATCC 43589 / DSM 3109 / JCM 10099 / NBRC 100826 / MSB8) protein is Holliday junction branch migration complex subunit RuvB.